The chain runs to 170 residues: Alpha-crystallin A chain (170 aa).

The residue at position 1 (methionine 1) is an N-acetylmethionine. The required for complex formation with BFSP1 and BFSP2 stretch occupies residues 1–63 (MDVTIQHPWF…RTALDSGISE (63 aa)). A Deamidated glutamine; partial modification is found at glutamine 6. Serine 45 carries the phosphoserine modification. Glutamine 50 is subject to Deamidated glutamine; partial. The sHSP domain maps to 52-161 (LFRTALDSGI…GERTIPVSRE (110 aa)). Lysine 99 bears the N6-acetyllysine mark. Histidine 100 provides a ligand contact to Zn(2+). Asparagine 101 carries the deamidated asparagine; partial modification. 3 residues coordinate Zn(2+): glutamate 102, histidine 107, and histidine 151. The disordered stretch occupies residues 144–170 (PKLVDPSHGERTIPVSREEKPSSAPSS). The segment covering 148-164 (DPSHGERTIPVSREEKP) has biased composition (basic and acidic residues). O-linked (GlcNAc) serine glycosylation occurs at serine 159.

This sequence belongs to the small heat shock protein (HSP20) family. Heteromer composed of three CRYAA and one CRYAB subunits. Inter-subunit bridging via zinc ions enhances stability, which is crucial as there is no protein turn over in the lens. Can also form homodimers and homotetramers (dimers of dimers) which serve as the building blocks of homooligomers. Within homooligomers, the zinc-binding motif is created from residues of 3 different molecules. His-100 and Glu-102 from one molecule are ligands of the zinc ion, and His-107 and His-151 residues from additional molecules complete the site with tetrahedral coordination geometry. Part of a complex required for lens intermediate filament formation composed of BFSP1, BFSP2 and CRYAA. In terms of processing, acetylation at Lys-99 may increase chaperone activity. Post-translationally, undergoes age-dependent proteolytical cleavage at the C-terminus.

Its subcellular location is the cytoplasm. It is found in the nucleus. Its function is as follows. Contributes to the transparency and refractive index of the lens. Acts as a chaperone, preventing aggregation of various proteins under a wide range of stress conditions. Required for the correct formation of lens intermediate filaments as part of a complex composed of BFSP1, BFSP2 and CRYAA. The sequence is that of Alpha-crystallin A chain (CRYAA) from Tamandua mexicana (Northern Tamandua).